Here is a 644-residue protein sequence, read N- to C-terminus: Ribonuclease R (644 aa).

The 319-residue stretch at 211–529 (RINYSHIPFI…LHRLLKELLF (319 aa)) folds into the RNB domain. In terms of domain architecture, S1 motif spans 573-644 (LELLEKEFLG…ITERIKEHVS (72 aa)).

The protein belongs to the RNR ribonuclease family. RNase R subfamily.

Its subcellular location is the cytoplasm. It carries out the reaction Exonucleolytic cleavage in the 3'- to 5'-direction to yield nucleoside 5'-phosphates.. Its function is as follows. 3'-5' exoribonuclease that releases 5'-nucleoside monophosphates and is involved in maturation of structured RNAs. The polypeptide is Ribonuclease R (Helicobacter pylori (strain ATCC 700392 / 26695) (Campylobacter pylori)).